A 198-amino-acid polypeptide reads, in one-letter code: Molybdopterin synthase catalytic subunit (198 aa).

Residues 1 to 27 are compositionally biased toward low complexity; that stretch reads MASQPPQEPTPTATSTPSTSALASLPP. The tract at residues 1–40 is disordered; sequence MASQPPQEPTPTATSTPSTSALASLPPHLDPTTYPRTLTS. Residues 143 to 144, Lys-159, and 166 to 168 contribute to the substrate site; these read HR and KRE. Residues 176–198 form a disordered region; the sequence is EWRENRERDAEGKVVAEKQEERE.

The protein belongs to the MoaE family. MOCS2B subfamily. In terms of assembly, heterotetramer; composed of 2 small (MOCS2A) and 2 large (MOCS2B) subunits.

The protein resides in the cytoplasm. The catalysed reaction is 2 [molybdopterin-synthase sulfur-carrier protein]-C-terminal-Gly-aminoethanethioate + cyclic pyranopterin phosphate + H2O = molybdopterin + 2 [molybdopterin-synthase sulfur-carrier protein]-C-terminal Gly-Gly + 2 H(+). The protein operates within cofactor biosynthesis; molybdopterin biosynthesis. Its function is as follows. Catalytic subunit of the molybdopterin synthase complex, a complex that catalyzes the conversion of precursor Z into molybdopterin. Acts by mediating the incorporation of 2 sulfur atoms from thiocarboxylated MOCS2A into precursor Z to generate a dithiolene group. The sequence is that of Molybdopterin synthase catalytic subunit from Aspergillus clavatus (strain ATCC 1007 / CBS 513.65 / DSM 816 / NCTC 3887 / NRRL 1 / QM 1276 / 107).